We begin with the raw amino-acid sequence, 471 residues long: Ribulose bisphosphate carboxylase large chain (471 aa).

Residue Lys5 is modified to N6,N6,N6-trimethyllysine. 2 residues coordinate substrate: Asn114 and Thr164. Catalysis depends on Lys166, which acts as the Proton acceptor. Lys168 serves as a coordination point for substrate. Residues Lys192, Asp194, and Glu195 each coordinate Mg(2+). At Lys192 the chain carries N6-carboxylysine. His285 (proton acceptor) is an active-site residue. Substrate contacts are provided by Arg286, His318, and Ser370.

The protein belongs to the RuBisCO large chain family. Type I subfamily. As to quaternary structure, heterohexadecamer of 8 large chains and 8 small chains; disulfide-linked. The disulfide link is formed within the large subunit homodimers. Mg(2+) is required as a cofactor. The disulfide bond which can form in the large chain dimeric partners within the hexadecamer appears to be associated with oxidative stress and protein turnover.

The protein resides in the plastid. It is found in the chloroplast. The enzyme catalyses 2 (2R)-3-phosphoglycerate + 2 H(+) = D-ribulose 1,5-bisphosphate + CO2 + H2O. It catalyses the reaction D-ribulose 1,5-bisphosphate + O2 = 2-phosphoglycolate + (2R)-3-phosphoglycerate + 2 H(+). RuBisCO catalyzes two reactions: the carboxylation of D-ribulose 1,5-bisphosphate, the primary event in carbon dioxide fixation, as well as the oxidative fragmentation of the pentose substrate in the photorespiration process. Both reactions occur simultaneously and in competition at the same active site. The protein is Ribulose bisphosphate carboxylase large chain of Anthocleista grandiflora (Forest fever tree).